A 260-amino-acid chain; its full sequence is 3'-5' ssDNA/RNA exonuclease TatD (260 aa).

Positions 91, 127, and 152 each coordinate a divalent metal cation.

It belongs to the metallo-dependent hydrolases superfamily. TatD-type hydrolase family. TatD subfamily. As to quaternary structure, monomer. Mg(2+) is required as a cofactor.

It is found in the cytoplasm. 3'-5' exonuclease that prefers single-stranded DNA and RNA. May play a role in the H(2)O(2)-induced DNA damage repair. The sequence is that of 3'-5' ssDNA/RNA exonuclease TatD from Salmonella typhimurium (strain LT2 / SGSC1412 / ATCC 700720).